We begin with the raw amino-acid sequence, 240 residues long: Aliphatic sulfonates import ATP-binding protein SsuB 2 (240 aa).

In terms of domain architecture, ABC transporter spans 2-218 (VRTRELRRGF…RHSAPEFIHA (217 aa)). 34–41 (GRSGSGKS) is an ATP binding site.

Belongs to the ABC transporter superfamily. Aliphatic sulfonates importer (TC 3.A.1.17.2) family. In terms of assembly, the complex is composed of two ATP-binding proteins (SsuB), two transmembrane proteins (SsuC) and a solute-binding protein (SsuA).

It localises to the cell membrane. It carries out the reaction ATP + H2O + aliphatic sulfonate-[sulfonate-binding protein]Side 1 = ADP + phosphate + aliphatic sulfonateSide 2 + [sulfonate-binding protein]Side 1.. Part of the ABC transporter complex SsuABC involved in aliphatic sulfonates import. Responsible for energy coupling to the transport system. The chain is Aliphatic sulfonates import ATP-binding protein SsuB 2 from Nocardia farcinica (strain IFM 10152).